Here is a 222-residue protein sequence, read N- to C-terminus: Interleukin-12 subunit alpha (222 aa).

The signal sequence occupies residues 1–25 (MCPLRNLLLVATLVLLNHLDHLSLG). 3 disulfides stabilise this stretch: C40/C113, C67/C199, and C88/C126. N42 and N96 each carry an N-linked (GlcNAc...) asparagine glycan.

This sequence belongs to the IL-6 superfamily. As to quaternary structure, heterodimer with IL12B; disulfide-linked. This heterodimer is known as interleukin IL-12. Heterodimer with EBI3/IL27B; not disulfide-linked. This heterodimer is known as interleukin IL-35. Interacts with NBR1; this interaction promotes IL-12 secretion.

Its subcellular location is the secreted. Functionally, heterodimerizes with IL12B to form the IL-12 cytokine or with EBI3/IL27B to form the IL-35 cytokine. IL-12 is primarily produced by professional antigen-presenting cells (APCs) such as B-cells and dendritic cells (DCs) as well as macrophages and granulocytes and regulates T-cell and natural killer-cell responses, induces the production of interferon-gamma (IFN-gamma), favors the differentiation of T-helper 1 (Th1) cells and is an important link between innate resistance and adaptive immunity. Mechanistically, exerts its biological effects through a receptor composed of IL12R1 and IL12R2 subunits. Binding to the receptor results in the rapid tyrosine phosphorylation of a number of cellular substrates including the JAK family kinases TYK2 and JAK2. In turn, recruited STAT4 gets phosphorylated and translocates to the nucleus where it regulates cytokine/growth factor responsive genes. As part of IL-35, plays essential roles in maintaining the immune homeostasis of the liver microenvironment and also functions as an immune-suppressive cytokine. Mediates biological events through unconventional receptors composed of IL12RB2 and gp130/IL6ST heterodimers or homodimers. Signaling requires the transcription factors STAT1 and STAT4, which form a unique heterodimer that binds to distinct DNA sites. This is Interleukin-12 subunit alpha (IL12A) from Sus scrofa (Pig).